A 128-amino-acid chain; its full sequence is MSLRQAILPACLNNTGDSMAIVTNTPIWVWCVLLCLLYVGSKQSKTRQIKPYKLTFLPLIFLPIVIMSIMQSHHPLIAGFGFIVGLALGLFFRVDNLEGCPFVTKTRATVDTKRKLSSAYPVLIHFYF.

3 helical membrane-spanning segments follow: residues methionine 19–serine 41, leucine 54–glutamine 71, and proline 75–leucine 97.

It is found in the cell membrane. This is an uncharacterized protein from Pasteurella multocida (strain Pm70).